The sequence spans 194 residues: Ribonuclease HII (194 aa).

Residues 16-194 (CIVAGIDEAG…PYHRRSFRCC (179 aa)) enclose the RNase H type-2 domain. The a divalent metal cation site is built by aspartate 22, glutamate 23, and aspartate 113.

Belongs to the RNase HII family. Mn(2+) is required as a cofactor. Requires Mg(2+) as cofactor.

It localises to the cytoplasm. The enzyme catalyses Endonucleolytic cleavage to 5'-phosphomonoester.. Functionally, endonuclease that specifically degrades the RNA of RNA-DNA hybrids. The sequence is that of Ribonuclease HII from Rickettsia massiliae (strain Mtu5).